The following is a 165-amino-acid chain: Lipoprotein signal peptidase (165 aa).

Transmembrane regions (helical) follow at residues 11–31 (YWVL…AVLS), 41–61 (VIPS…FSFL), 64–84 (QGGW…AYLV), and 92–112 (FATL…GNVI). Residues aspartate 122 and aspartate 140 contribute to the active site. A helical membrane pass occupies residues 132–152 (FYPAFNIADSFICVGAVLAVL).

It belongs to the peptidase A8 family.

The protein resides in the cell inner membrane. It catalyses the reaction Release of signal peptides from bacterial membrane prolipoproteins. Hydrolyzes -Xaa-Yaa-Zaa-|-(S,diacylglyceryl)Cys-, in which Xaa is hydrophobic (preferably Leu), and Yaa (Ala or Ser) and Zaa (Gly or Ala) have small, neutral side chains.. It participates in protein modification; lipoprotein biosynthesis (signal peptide cleavage). Functionally, this protein specifically catalyzes the removal of signal peptides from prolipoproteins. The protein is Lipoprotein signal peptidase of Neisseria meningitidis serogroup A / serotype 4A (strain DSM 15465 / Z2491).